A 396-amino-acid chain; its full sequence is Tryptophan synthase beta chain (396 aa).

At Lys-86 the chain carries N6-(pyridoxal phosphate)lysine.

Belongs to the TrpB family. Tetramer of two alpha and two beta chains. Pyridoxal 5'-phosphate is required as a cofactor.

The catalysed reaction is (1S,2R)-1-C-(indol-3-yl)glycerol 3-phosphate + L-serine = D-glyceraldehyde 3-phosphate + L-tryptophan + H2O. The protein operates within amino-acid biosynthesis; L-tryptophan biosynthesis; L-tryptophan from chorismate: step 5/5. Its function is as follows. The beta subunit is responsible for the synthesis of L-tryptophan from indole and L-serine. The sequence is that of Tryptophan synthase beta chain from Vibrio campbellii (strain ATCC BAA-1116).